Consider the following 243-residue polypeptide: uncharacterized protein (243 aa).

4 helical membrane-spanning segments follow: residues 38 to 58 (AYFL…VGIF), 99 to 119 (FGIA…FLGY), 143 to 163 (FYFS…FLVL), and 204 to 224 (AFAT…LGLF).

It localises to the cell membrane. This is an uncharacterized protein from Mycoplasma pneumoniae (strain ATCC 29342 / M129 / Subtype 1) (Mycoplasmoides pneumoniae).